The chain runs to 146 residues: 3-dehydroquinate dehydratase (146 aa).

The active-site Proton acceptor is the Tyr-24. Residues Asn-73, His-79, and Asp-86 each coordinate substrate. His-99 acts as the Proton donor in catalysis. Residues 100–101 (LS) and Arg-110 each bind substrate.

This sequence belongs to the type-II 3-dehydroquinase family. Homododecamer.

The catalysed reaction is 3-dehydroquinate = 3-dehydroshikimate + H2O. It functions in the pathway metabolic intermediate biosynthesis; chorismate biosynthesis; chorismate from D-erythrose 4-phosphate and phosphoenolpyruvate: step 3/7. In terms of biological role, catalyzes a trans-dehydration via an enolate intermediate. The chain is 3-dehydroquinate dehydratase from Shewanella baltica (strain OS195).